A 361-amino-acid polypeptide reads, in one-letter code: 3-dehydroquinate synthase (361 aa).

The protein belongs to the archaeal-type DHQ synthase family.

It carries out the reaction 2-amino-2,3,7-trideoxy-D-lyxo-hept-6-ulosonate + NAD(+) + H2O = 3-dehydroquinate + NH4(+) + NADH + H(+). Catalyzes the oxidative deamination and cyclization of 2-amino-3,7-dideoxy-D-threo-hept-6-ulosonic acid (ADH) to yield 3-dehydroquinate (DHQ), which is fed into the canonical shikimic pathway of aromatic amino acid biosynthesis. The protein is 3-dehydroquinate synthase of Methanococcus maripaludis (strain DSM 14266 / JCM 13030 / NBRC 101832 / S2 / LL).